Consider the following 472-residue polypeptide: Phosphoenolpyruvate carboxykinase (ATP), glycosomal (472 aa).

Residue 221–228 (GLSGTGKT) coordinates ATP.

The protein belongs to the phosphoenolpyruvate carboxykinase (ATP) family. In terms of assembly, homodimer.

The protein resides in the glycosome. It carries out the reaction oxaloacetate + ATP = phosphoenolpyruvate + ADP + CO2. It functions in the pathway carbohydrate biosynthesis; gluconeogenesis. In terms of biological role, P60 has the capability to bind to microtubules and membrane vesicles in vitro. This chain is Phosphoenolpyruvate carboxykinase (ATP), glycosomal, found in Trypanosoma brucei brucei.